The sequence spans 428 residues: D-inositol 3-phosphate glycosyltransferase (428 aa).

H5 serves as a coordination point for 1D-myo-inositol 3-phosphate. UDP-N-acetyl-alpha-D-glucosamine-binding positions include 11 to 12 (QP) and G19. 1D-myo-inositol 3-phosphate is bound by residues 16–21 (DAGGMN), K74, Y107, T131, and R151. Positions 225, 230, and 283 each coordinate UDP-N-acetyl-alpha-D-glucosamine. Residues F292, Q293, and A295 each coordinate Mg(2+). Positions 305 and 313 each coordinate UDP-N-acetyl-alpha-D-glucosamine. Residue T319 coordinates Mg(2+).

Belongs to the glycosyltransferase group 1 family. MshA subfamily. In terms of assembly, homodimer.

The catalysed reaction is 1D-myo-inositol 3-phosphate + UDP-N-acetyl-alpha-D-glucosamine = 1D-myo-inositol 2-acetamido-2-deoxy-alpha-D-glucopyranoside 3-phosphate + UDP + H(+). Functionally, catalyzes the transfer of a N-acetyl-glucosamine moiety to 1D-myo-inositol 3-phosphate to produce 1D-myo-inositol 2-acetamido-2-deoxy-glucopyranoside 3-phosphate in the mycothiol biosynthesis pathway. The protein is D-inositol 3-phosphate glycosyltransferase of Mycobacterium leprae (strain Br4923).